We begin with the raw amino-acid sequence, 132 residues long: ATP synthase epsilon chain, chloroplastic (132 aa).

This sequence belongs to the ATPase epsilon chain family. As to quaternary structure, F-type ATPases have 2 components, CF(1) - the catalytic core - and CF(0) - the membrane proton channel. CF(1) has five subunits: alpha(3), beta(3), gamma(1), delta(1), epsilon(1). CF(0) has three main subunits: a, b and c.

It localises to the plastid. Its subcellular location is the chloroplast thylakoid membrane. Produces ATP from ADP in the presence of a proton gradient across the membrane. The polypeptide is ATP synthase epsilon chain, chloroplastic (Calycanthus floridus var. glaucus (Eastern sweetshrub)).